We begin with the raw amino-acid sequence, 200 residues long: Lipopolysaccharide core heptose(II)-phosphate phosphatase (200 aa).

Residues 1-25 (MLAFCRSSLKSKKYFIILLALAAIA) form the signal peptide.

This sequence belongs to the phosphoglycerate mutase family. Ais subfamily.

The protein localises to the periplasm. It functions in the pathway bacterial outer membrane biogenesis; lipopolysaccharide metabolism. Functionally, catalyzes the dephosphorylation of heptose(II) of the outer membrane lipopolysaccharide core. The chain is Lipopolysaccharide core heptose(II)-phosphate phosphatase from Escherichia coli O157:H7 (strain EC4115 / EHEC).